Reading from the N-terminus, the 336-residue chain is Formimidoylglutamase (336 aa).

The segment covering 1–10 has biased composition (polar residues); sequence MNPNFTTEHT. Residues 1–22 are disordered; it reads MNPNFTTEHTWQGRHDPEDGQA. The segment covering 11–22 has biased composition (basic and acidic residues); that stretch reads WQGRHDPEDGQA. Mn(2+) is bound by residues histidine 127, aspartate 157, histidine 159, aspartate 161, aspartate 254, and aspartate 256.

This sequence belongs to the arginase family. Mn(2+) serves as cofactor.

The catalysed reaction is N-formimidoyl-L-glutamate + H2O = formamide + L-glutamate. Its pathway is amino-acid degradation; L-histidine degradation into L-glutamate; L-glutamate from N-formimidoyl-L-glutamate (hydrolase route): step 1/1. Functionally, catalyzes the conversion of N-formimidoyl-L-glutamate to L-glutamate and formamide. The protein is Formimidoylglutamase of Vibrio cholerae serotype O1 (strain ATCC 39541 / Classical Ogawa 395 / O395).